We begin with the raw amino-acid sequence, 261 residues long: uncharacterized protein (261 aa).

The next 6 membrane-spanning stretches (helical) occupy residues 31–51 (TFLS…TGIV), 71–91 (TNVM…SWLL), 101–121 (LAYI…AGIA), 130–150 (LTSS…ASFI), 167–187 (LLLF…IPYV), and 213–233 (FAWL…YLAI).

The protein resides in the cell membrane. This is an uncharacterized protein from Mycoplasma genitalium (strain ATCC 33530 / DSM 19775 / NCTC 10195 / G37) (Mycoplasmoides genitalium).